Consider the following 213-residue polypeptide: Adenylate kinase (213 aa).

10 to 15 provides a ligand contact to ATP; it reads GAGKGT. The tract at residues 30-59 is NMP; sequence STGDMFRAAMANQTEMGVLAKSYIDKGDLV. Residues threonine 31, arginine 36, 57–59, 86–89, and glutamine 93 each bind AMP; these read DLV and GYPR. An LID region spans residues 127 to 160; it reads GRIINKKTGETFHKIFNPPVGDYKEEDFYQREDD. ATP-binding positions include arginine 128 and 137-138; that span reads TF. 2 residues coordinate AMP: arginine 157 and arginine 168. Lysine 196 serves as a coordination point for ATP.

This sequence belongs to the adenylate kinase family. Monomer.

The protein resides in the cytoplasm. The catalysed reaction is AMP + ATP = 2 ADP. It functions in the pathway purine metabolism; AMP biosynthesis via salvage pathway; AMP from ADP: step 1/1. Functionally, catalyzes the reversible transfer of the terminal phosphate group between ATP and AMP. Plays an important role in cellular energy homeostasis and in adenine nucleotide metabolism. This chain is Adenylate kinase, found in Streptococcus equi subsp. equi (strain 4047).